The following is a 493-amino-acid chain: Vacuolar-processing enzyme (493 aa).

The N-terminal stretch at 1-34 is a signal peptide; it reads MAVHRSLLNKPTWCRVAFWWWMLVMVMRIQGTNG. Residues 35 to 53 constitute a propeptide that is removed on maturation; that stretch reads KEQDSVIKLPTQEVDAESD. Residue histidine 176 is part of the active site. Catalysis depends on cysteine 218, which acts as the Nucleophile. Residues cysteine 251 and cysteine 265 are joined by a disulfide bond. An N-linked (GlcNAc...) asparagine glycan is attached at asparagine 318. Intrachain disulfides connect cysteine 429–cysteine 459 and cysteine 441–cysteine 476.

It belongs to the peptidase C13 family.

In terms of biological role, asparagine-specific endopeptidase involved in the processing of vacuolar seed protein precursors into the mature forms. This chain is Vacuolar-processing enzyme, found in Phaseolus vulgaris (Kidney bean).